Reading from the N-terminus, the 447-residue chain is UDP-N-acetylmuramate--L-alanine ligase (447 aa).

An ATP-binding site is contributed by 107–113 (GTHGKTT).

This sequence belongs to the MurCDEF family.

It localises to the cytoplasm. The enzyme catalyses UDP-N-acetyl-alpha-D-muramate + L-alanine + ATP = UDP-N-acetyl-alpha-D-muramoyl-L-alanine + ADP + phosphate + H(+). The protein operates within cell wall biogenesis; peptidoglycan biosynthesis. Cell wall formation. The chain is UDP-N-acetylmuramate--L-alanine ligase from Rubrobacter xylanophilus (strain DSM 9941 / JCM 11954 / NBRC 16129 / PRD-1).